The following is a 260-amino-acid chain: Hydroxyethylthiazole kinase 1 (260 aa).

Methionine 39 lines the substrate pocket. 2 residues coordinate ATP: arginine 115 and threonine 160. Glycine 187 contributes to the substrate binding site.

The protein belongs to the Thz kinase family. Mg(2+) serves as cofactor.

The catalysed reaction is 5-(2-hydroxyethyl)-4-methylthiazole + ATP = 4-methyl-5-(2-phosphooxyethyl)-thiazole + ADP + H(+). It participates in cofactor biosynthesis; thiamine diphosphate biosynthesis; 4-methyl-5-(2-phosphoethyl)-thiazole from 5-(2-hydroxyethyl)-4-methylthiazole: step 1/1. Functionally, catalyzes the phosphorylation of the hydroxyl group of 4-methyl-5-beta-hydroxyethylthiazole (THZ). This is Hydroxyethylthiazole kinase 1 from Streptococcus pneumoniae serotype 2 (strain D39 / NCTC 7466).